A 164-amino-acid polypeptide reads, in one-letter code: UPF0114 protein KPN78578_33570 (164 aa).

Helical transmembrane passes span 15 to 35 (LLAP…IKFF), 53 to 73 (MILT…LVMV), 109 to 126 (VAAS…RVFM), and 136 to 156 (LMWY…MGYL).

It belongs to the UPF0114 family.

Its subcellular location is the cell membrane. The chain is UPF0114 protein KPN78578_33570 from Klebsiella pneumoniae subsp. pneumoniae (strain ATCC 700721 / MGH 78578).